Consider the following 317-residue polypeptide: CXXC-type zinc finger protein 5 (317 aa).

Residues 1-49 (MSSLSSGPQDTGGSSSSSSNGSSGSGPKAGVADKSAAVAAAAPASVADD) are compositionally biased toward low complexity. A disordered region spans residues 1-96 (MSSLSSGPQD…GSGGGSMMGG (96 aa)). A compositionally biased stretch (gly residues) spans 83–94 (GGSGGSGGGSMM). The segment at 251 to 292 (GKKKRKRCGMCAPCRRRINCEQCSSCRNRKTGHQICKFRKCE) adopts a CXXC-type zinc-finger fold. Residues 252–257 (KKKRKR) carry the Nuclear localization signal motif. Zn(2+)-binding residues include cysteine 258, cysteine 261, cysteine 264, cysteine 270, cysteine 273, cysteine 276, cysteine 286, and cysteine 291.

As to quaternary structure, interacts with DVL1. Interacts with RBPJ.

It localises to the nucleus. The protein resides in the cytoplasm. Functionally, may indirectly participate in activation of the NF-kappa-B and MAPK pathways. Acts as a mediator of BMP4-mediated modulation of canonical Wnt signaling activity in neural stem cells. Required for DNA damage-induced ATM phosphorylation, p53 activation and cell cycle arrest. Involved in myelopoiesis. Binds to the oxygen responsive element of COX4I2 and represses its transcription under hypoxia conditions (4% oxygen), as well as normoxia conditions (20% oxygen). May repress COX4I2 transactivation induced by CHCHD2 and RBPJ. Binds preferentially to DNA containing cytidine-phosphate-guanosine (CpG) dinucleotides over CpH (H=A, T, and C), hemimethylated-CpG and hemimethylated-hydroxymethyl-CpG. The sequence is that of CXXC-type zinc finger protein 5 (CXXC5) from Bos taurus (Bovine).